The primary structure comprises 341 residues: MAAAAELSSSSGSERSLEQCSSPLLTREVLCEVFRSLHTLTRQLNLRDDVVKITIDWNRLQSLSASQPALLLTALEQHVLYLQPFLAKLQSLMKENSTATEIRQTEAETKSELRAIHPTEDLQDEGKPKDCDVGDVKKTQNLFDPEVVQIKAGKAEIDRRISAFIERKQAEINENNVREFCNVIDCNQENSCARTDAVFTPYPGFKSHVKVSRVVNTYGPQTRPEGIAGSGHKPTGMLRDCGNQAVEERLQNIEAHLRLQTGGPVPRDIYQRIKKLEDKILELEGISPEYFQSVNFSGKRRKVQPPQQNYSLAELDEKISALKRALLRKSREADSMAAHLP.

At serine 91 the chain carries Phosphoserine. Residues lysine 94, lysine 127, lysine 137, lysine 151, and lysine 233 each participate in a glycyl lysine isopeptide (Lys-Gly) (interchain with G-Cter in SUMO2) cross-link. The segment at alanine 170–proline 341 is interaction with MAP3K12. The interval isoleucine 269–leucine 283 is leucine-zipper 1. Lysine 299 carries the N6-acetyllysine; alternate modification. Residue lysine 299 forms a Glycyl lysine isopeptide (Lys-Gly) (interchain with G-Cter in SUMO2); alternate linkage. Glycyl lysine isopeptide (Lys-Gly) (interchain with G-Cter in SUMO2) cross-links involve residues lysine 302 and lysine 323. The tract at residues leucine 312–leucine 327 is leucine-zipper 2.

As to quaternary structure, component of the ADA2A-containing complex (ATAC), composed of KAT14, KAT2A, TADA2L, TADA3L, ZZ3, MBIP, WDR5, YEATS2, CCDC101 and DR1. In the complex, it probably interacts directly with KAT2A, KAT14 and WDR5.

The protein resides in the nucleus. It localises to the cytoplasm. Inhibits the MAP3K12 activity to induce the activation of the JNK/SAPK pathway. Component of the ATAC complex, a complex with histone acetyltransferase activity on histones H3 and H4. The chain is MAP3K12-binding inhibitory protein 1 (Mbip) from Mus musculus (Mouse).